A 41-amino-acid chain; its full sequence is Large ribosomal subunit protein bL36 (41 aa).

Belongs to the bacterial ribosomal protein bL36 family.

The polypeptide is Large ribosomal subunit protein bL36 (Beijerinckia indica subsp. indica (strain ATCC 9039 / DSM 1715 / NCIMB 8712)).